The following is a 208-amino-acid chain: Probable nicotinate-nucleotide adenylyltransferase (208 aa).

Belongs to the NadD family.

It catalyses the reaction nicotinate beta-D-ribonucleotide + ATP + H(+) = deamido-NAD(+) + diphosphate. Its pathway is cofactor biosynthesis; NAD(+) biosynthesis; deamido-NAD(+) from nicotinate D-ribonucleotide: step 1/1. In terms of biological role, catalyzes the reversible adenylation of nicotinate mononucleotide (NaMN) to nicotinic acid adenine dinucleotide (NaAD). The polypeptide is Probable nicotinate-nucleotide adenylyltransferase (Acidothermus cellulolyticus (strain ATCC 43068 / DSM 8971 / 11B)).